The primary structure comprises 158 residues: Eukaryotic translation initiation factor 5A-3 (158 aa).

The segment covering 1–10 (MSDDEHHFES) has biased composition (basic and acidic residues). The disordered stretch occupies residues 1-23 (MSDDEHHFESSDAGASKTYPQQA). Serine 2 is subject to Phosphoserine. Hypusine is present on lysine 51.

This sequence belongs to the eIF-5A family. In terms of processing, lys-52 undergoes hypusination, a unique post-translational modification that consists in the addition of a butylamino group from spermidine to lysine side chain, leading to the formation of the unusual amino acid hypusine. eIF-5As are the only known proteins to undergo this modification, which is essential for their function. As to expression, expressed in the vascular tissues of roots, stems and leaves. Localized in phloem companion cells rather than sieve-tube members. Not expressed in xylem or procambium. Detected in root tips and in the chalazal tissue of fertilized ovules.

Its function is as follows. Translation factor that promotes translation elongation and termination, particularly upon ribosome stalling at specific amino acid sequence contexts. Binds between the exit (E) and peptidyl (P) site of the ribosome and promotes rescue of stalled ribosome: specifically required for efficient translation of polyproline-containing peptides as well as other motifs that stall the ribosome. Acts as a ribosome quality control (RQC) cofactor by joining the RQC complex to facilitate peptidyl transfer during CAT tailing step. Involved in supporting growth and plays a regulatory role in the response to sub-lethal osmotic and nutrient stress. This chain is Eukaryotic translation initiation factor 5A-3 (ELF5A-3), found in Arabidopsis thaliana (Mouse-ear cress).